Here is a 228-residue protein sequence, read N- to C-terminus: Small ribosomal subunit protein uS2 (228 aa).

It belongs to the universal ribosomal protein uS2 family.

The polypeptide is Small ribosomal subunit protein uS2 (Blochmanniella pennsylvanica (strain BPEN)).